Reading from the N-terminus, the 312-residue chain is Src-like-adapter (312 aa).

A disordered region spans residues 1–33 (MLCRLPGPSTSRGEKEMGNSMKSTPAPLERPLS). The 61-residue stretch at 38 to 98 (LESDFLAVLN…PGICVARVYH (61 aa)) folds into the SH3 domain. One can recognise an SH2 domain in the interval 100–191 (WLFEGLGRDK…GLCCVLTTPC (92 aa)). Residues 206-312 (CTSPGSPVTL…TQKTKALTAT (107 aa)) are SLA C-terminal. The residue at position 274 (Ser274) is a Phosphoserine.

In terms of assembly, homodimer. Interacts with phosphorylated CBL, SYK and LAT. Homodimerization and interaction with phosphorylated CBL occurs via its C-terminal domain. Interacts with PDGFRB and EPHA2. Interacts with phosphorylated proteins ZAP70; CD3Z; VAV1 and LCP2 via its SH2 domain. Post-translationally, phosphorylated.

The protein localises to the cytoplasm. It is found in the endosome. Adapter protein, which negatively regulates T-cell receptor (TCR) signaling. Inhibits T-cell antigen-receptor induced activation of nuclear factor of activated T-cells. Involved in the negative regulation of positive selection and mitosis of T-cells. May act by linking signaling proteins such as ZAP70 with CBL, leading to a CBL dependent degradation of signaling proteins. The chain is Src-like-adapter (Sla) from Rattus norvegicus (Rat).